The following is a 72-amino-acid chain: ATP synthase subunit L (72 aa).

In terms of assembly, F-type ATP synthases have 2 components, the catalytic core F(1) and the membrane-embedded component F(0), linked together by a central stalk and a peripheral stalk. The central stalk, also called rotor shaft, is often seen as part of F(1). The peripheral stalk is seen as part of F(0). F(0) contains the membrane channel next to the rotor. F-type ATP synthases form dimers but each monomer functions independently in ATP generation. The dimer consists of 18 different polypeptides: ATP1 (subunit alpha, part of F(1), 3 molecules per monomer), ATP2 (subunit beta, part of F(1), 3 molecules per monomer), ATP3 (subunit gamma, part of the central stalk), ATP4 (subunit b, part of the peripheral stalk), ATP5/OSCP (subunit 5/OSCP, part of the peripheral stalk), ATP6 (subunit a, part of the peripheral stalk), ATP7 (subunit d, part of the peripheral stalk), ATP8 (subunit 8, part of the peripheral stalk), OLI1 (subunit c, part of the rotor, 10 molecules per monomer), ATP14 (subunit h, part of the peripheral stalk), ATP15 (subunit epsilon, part of the central stalk), ATP16 (subunit delta, part of the central stalk), ATP17 (subunit f, part of the peripheral stalk), ATP18 (subunit i/j, part of the peripheral stalk). Dimer-specific subunits are ATP19 (subunit k, at interface between monomers), ATP20 (subunit g, at interface between monomers), TIM11 (subunit e, at interface between monomers). Also contains subunit L.

The protein localises to the mitochondrion inner membrane. Mitochondrial membrane ATP synthase (F(1)F(0) ATP synthase or Complex V) produces ATP from ADP in the presence of a proton gradient across the membrane which is generated by electron transport complexes of the respiratory chain. F-type ATP synthases consist of two structural domains, F(1) - containing the extramembraneous catalytic core, and F(0) - containing the membrane proton channel, linked together by a central stalk and a peripheral stalk. During catalysis, ATP synthesis in the catalytic domain of F(1) is coupled via a rotary mechanism of the central stalk subunits to proton translocation. This chain is ATP synthase subunit L, found in Pichia angusta (Yeast).